Consider the following 121-residue polypeptide: Mitochondrial intermembrane space cysteine motif-containing protein MIX14 (121 aa).

2 consecutive CHCH domains span residues 14-56 (VANC…VPSV) and 60-105 (MSEC…VKNK). 4 short sequence motifs (cx9C motif) span residues 17–27 (CPQEFLQYHKC), 38–48 (CKDGRMILSTC), 63–73 (CSEPMKKYDQC), and 87–97 (CLGFLQDLRKC). 4 disulfides stabilise this stretch: Cys-17/Cys-48, Cys-27/Cys-38, Cys-63/Cys-97, and Cys-73/Cys-87.

The protein resides in the mitochondrion intermembrane space. This chain is Mitochondrial intermembrane space cysteine motif-containing protein MIX14 (MIX14), found in Saccharomyces cerevisiae (strain ATCC 204508 / S288c) (Baker's yeast).